The sequence spans 228 residues: Translation initiation factor 6 (228 aa).

It belongs to the eIF-6 family.

In terms of biological role, binds to the 50S ribosomal subunit and prevents its association with the 30S ribosomal subunit to form the 70S initiation complex. The polypeptide is Translation initiation factor 6 (Thermococcus gammatolerans (strain DSM 15229 / JCM 11827 / EJ3)).